A 280-amino-acid polypeptide reads, in one-letter code: Bifunctional protein FolD (280 aa).

NADP(+)-binding positions include 166–168 and Ser-191; that span reads GRS.

This sequence belongs to the tetrahydrofolate dehydrogenase/cyclohydrolase family. Homodimer.

It catalyses the reaction (6R)-5,10-methylene-5,6,7,8-tetrahydrofolate + NADP(+) = (6R)-5,10-methenyltetrahydrofolate + NADPH. The enzyme catalyses (6R)-5,10-methenyltetrahydrofolate + H2O = (6R)-10-formyltetrahydrofolate + H(+). The protein operates within one-carbon metabolism; tetrahydrofolate interconversion. Its function is as follows. Catalyzes the oxidation of 5,10-methylenetetrahydrofolate to 5,10-methenyltetrahydrofolate and then the hydrolysis of 5,10-methenyltetrahydrofolate to 10-formyltetrahydrofolate. The polypeptide is Bifunctional protein FolD (Cellvibrio japonicus (strain Ueda107) (Pseudomonas fluorescens subsp. cellulosa)).